Consider the following 142-residue polypeptide: Mini-ribonuclease 3 (142 aa).

Asp33 is an active-site residue.

This sequence belongs to the MrnC RNase family. As to quaternary structure, homodimer. The cofactor is Mg(2+).

The protein resides in the cytoplasm. Its function is as follows. Involved in correct processing of both the 5' and 3' ends of 23S rRNA precursor. Processes 30S rRNA precursor transcript even in absence of ribonuclease 3 (Rnc); Rnc processes 30S rRNA into smaller rRNA precursors. This is Mini-ribonuclease 3 from Thermoanaerobacter sp. (strain X514).